Here is a 390-residue protein sequence, read N- to C-terminus: Putative RING-H2 finger protein ATL12 (390 aa).

The N-terminal stretch at 1-22 (MNSPQEISILFFFIIFLDYVSA) is a signal peptide. The chain crosses the membrane as a helical span at residues 41-61 (LAIITGVFSIVFTLTFVLLVY). The RING-type; atypical zinc finger occupies 124-166 (CSVCLSKFEDVEILRLLPKCRHAFHIGCIDQWLEQHATCPLCR).

Belongs to the RING-type zinc finger family. ATL subfamily.

Its subcellular location is the membrane. The catalysed reaction is S-ubiquitinyl-[E2 ubiquitin-conjugating enzyme]-L-cysteine + [acceptor protein]-L-lysine = [E2 ubiquitin-conjugating enzyme]-L-cysteine + N(6)-ubiquitinyl-[acceptor protein]-L-lysine.. The protein operates within protein modification; protein ubiquitination. This is Putative RING-H2 finger protein ATL12 (ATL12) from Arabidopsis thaliana (Mouse-ear cress).